We begin with the raw amino-acid sequence, 69 residues long: Cold shock-like protein CspC (69 aa).

The region spanning 6 to 66 (GQVKWFNESK…GQKGPAAVNV (61 aa)) is the CSD domain.

The protein localises to the cytoplasm. The sequence is that of Cold shock-like protein CspC (cspC) from Escherichia coli O157:H7.